A 227-amino-acid polypeptide reads, in one-letter code: Cytochrome c oxidase subunit 2 (227 aa).

Residues 1–14 are Mitochondrial intermembrane-facing; it reads MAYPFQLGLQDATS. A helical membrane pass occupies residues 15–45; it reads PIMEELMNFHDHTLMIVFLISTLVLYIISLM. At 46-59 the chain is on the mitochondrial matrix side; sequence LTTKLTHTSTMDAQ. Residues 60 to 87 form a helical membrane-spanning segment; sequence EVETVWTILPAVILIMIALPSLRILYMM. Over 88 to 227 the chain is Mitochondrial intermembrane; that stretch reads DEINNPVLTV…HFENWSTSMI (140 aa). Cu cation contacts are provided by His-161, Cys-196, Glu-198, Cys-200, His-204, and Met-207. A Mg(2+)-binding site is contributed by Glu-198.

Belongs to the cytochrome c oxidase subunit 2 family. As to quaternary structure, component of the cytochrome c oxidase (complex IV, CIV), a multisubunit enzyme composed of 14 subunits. The complex is composed of a catalytic core of 3 subunits MT-CO1, MT-CO2 and MT-CO3, encoded in the mitochondrial DNA, and 11 supernumerary subunits COX4I, COX5A, COX5B, COX6A, COX6B, COX6C, COX7A, COX7B, COX7C, COX8 and NDUFA4, which are encoded in the nuclear genome. The complex exists as a monomer or a dimer and forms supercomplexes (SCs) in the inner mitochondrial membrane with NADH-ubiquinone oxidoreductase (complex I, CI) and ubiquinol-cytochrome c oxidoreductase (cytochrome b-c1 complex, complex III, CIII), resulting in different assemblies (supercomplex SCI(1)III(2)IV(1) and megacomplex MCI(2)III(2)IV(2)). Found in a complex with TMEM177, COA6, COX18, COX20, SCO1 and SCO2. Interacts with TMEM177 in a COX20-dependent manner. Interacts with COX20. Interacts with COX16. The cofactor is Cu cation.

It is found in the mitochondrion inner membrane. It catalyses the reaction 4 Fe(II)-[cytochrome c] + O2 + 8 H(+)(in) = 4 Fe(III)-[cytochrome c] + 2 H2O + 4 H(+)(out). Its function is as follows. Component of the cytochrome c oxidase, the last enzyme in the mitochondrial electron transport chain which drives oxidative phosphorylation. The respiratory chain contains 3 multisubunit complexes succinate dehydrogenase (complex II, CII), ubiquinol-cytochrome c oxidoreductase (cytochrome b-c1 complex, complex III, CIII) and cytochrome c oxidase (complex IV, CIV), that cooperate to transfer electrons derived from NADH and succinate to molecular oxygen, creating an electrochemical gradient over the inner membrane that drives transmembrane transport and the ATP synthase. Cytochrome c oxidase is the component of the respiratory chain that catalyzes the reduction of oxygen to water. Electrons originating from reduced cytochrome c in the intermembrane space (IMS) are transferred via the dinuclear copper A center (CU(A)) of subunit 2 and heme A of subunit 1 to the active site in subunit 1, a binuclear center (BNC) formed by heme A3 and copper B (CU(B)). The BNC reduces molecular oxygen to 2 water molecules using 4 electrons from cytochrome c in the IMS and 4 protons from the mitochondrial matrix. The protein is Cytochrome c oxidase subunit 2 (MT-CO2) of Apodemus semotus (Taiwan field mouse).